The primary structure comprises 239 residues: Ribosome assembly factor mrt4 (239 aa).

This sequence belongs to the universal ribosomal protein uL10 family. Associates with the pre-60S ribosomal particle.

The protein localises to the nucleus. It is found in the nucleolus. The protein resides in the cytoplasm. In terms of biological role, component of the ribosome assembly machinery. Nuclear paralog of the ribosomal protein P0, it binds pre-60S subunits at an early stage of assembly in the nucleolus, and is replaced by P0 in cytoplasmic pre-60S subunits and mature 80S ribosomes. This is Ribosome assembly factor mrt4 from Candida glabrata (strain ATCC 2001 / BCRC 20586 / JCM 3761 / NBRC 0622 / NRRL Y-65 / CBS 138) (Yeast).